The sequence spans 93 residues: Small integral membrane protein 41 (93 aa).

Residues 38–58 (VVLGVLSLLVLCGVLFLGGGL) traverse the membrane as a helical segment. The segment covering 71–80 (REQRASREPE) has biased composition (basic and acidic residues). Residues 71–93 (REQRASREPEPGSASGEDGDDDS) form a disordered region.

It is found in the membrane. In Homo sapiens (Human), this protein is Small integral membrane protein 41.